Reading from the N-terminus, the 156-residue chain is Cytochrome c-type biogenesis protein CcmE 1 (156 aa).

Topologically, residues 1–8 (MNATRKQR) are cytoplasmic. Residues 9–29 (LWLVIGVLTAAALAVTLIALA) form a helical; Signal-anchor for type II membrane protein membrane-spanning segment. The Periplasmic segment spans residues 30–156 (LQRNMSYLFT…AAAAPLSGVR (127 aa)). Heme-binding residues include His-123 and Tyr-127.

Belongs to the CcmE/CycJ family.

It localises to the cell inner membrane. Heme chaperone required for the biogenesis of c-type cytochromes. Transiently binds heme delivered by CcmC and transfers the heme to apo-cytochromes in a process facilitated by CcmF and CcmH. This is Cytochrome c-type biogenesis protein CcmE 1 from Xanthomonas campestris pv. campestris (strain 8004).